The following is a 211-amino-acid chain: UPF0637 protein ABC2405 (211 aa).

Belongs to the UPF0637 family.

In Shouchella clausii (strain KSM-K16) (Alkalihalobacillus clausii), this protein is UPF0637 protein ABC2405.